Consider the following 1082-residue polypeptide: TNF receptor-associated factor homolog 1b (1082 aa).

The tract at residues 1–54 (MAEAVDEDSGVGRSLEESSNGQHSQAGEALSEWRSSGQVENGTPSTSPSYWDID) is disordered. Ala-2 is modified (N-acetylalanine). Polar residues predominate over residues 33 to 49 (WRSSGQVENGTPSTSPS). One can recognise an MATH domain in the interval 67-198 (YGQYTWKIPK…SGCLTIEAKV (132 aa)). Disordered stretches follow at residues 358–388 (LPPK…ERDE), 440–666 (TEQR…SNVG), 697–762 (SIVN…QVVL), 780–800 (LSAP…APII), 812–841 (SSVQ…NQQT), and 858–889 (SSSS…PTSS). Basic and acidic residues-rich tracts occupy residues 359 to 388 (PPKD…ERDE) and 440 to 453 (TEQR…EREK). The stretch at 446–507 (RGAAEREKKS…EEEKDSVTEK (62 aa)) forms a coiled coil. A compositionally biased stretch (basic residues) spans 454–471 (KSKKKQAKQKRNKNKGKD). Basic and acidic residues predominate over residues 472-488 (KRKEEKVSFATHAKDLE). Composition is skewed to low complexity over residues 519 to 534 (GDVS…SADI) and 560 to 573 (SSEG…ISIS). Composition is skewed to polar residues over residues 588–630 (DDSS…QQVK) and 645–666 (QPST…SNVG). Composition is skewed to low complexity over residues 858 to 871 (SSSS…SSHG) and 878 to 889 (PSSSYSQAPTSS).

As to quaternary structure, forms homooligomers. Interacts with SNC1, RPS2 and CPR1/CPR30. Interacts with ATG6.

It is found in the cytoplasm. The protein resides in the cell membrane. Functions redundantly with TRAF1A in the regulation of plant immune response. Contributes to the turnover of the nucleotide-binding domain and leucine-rich repeat-containing (NB-LRR) immune receptors SNC1 and RPS2. May associate with an E3 ubiquitin-protein ligase complex, which modulates ubiquitination and subsequent degradation of NB-LRR immune sensors to maintain their homeostasis. Functions redundantly with TRAF1A in the regulation of autophagosome formation. Required for SINAT1- and SINAT2-mediated ubiquitination and destabilization of ATG6. Functions as a molecular adapter that helps to regulate autophagy by modulating ATG6 stability. This is TNF receptor-associated factor homolog 1b from Arabidopsis thaliana (Mouse-ear cress).